Reading from the N-terminus, the 455-residue chain is Chromosomal replication initiator protein DnaA (455 aa).

The interval 1 to 77 (MASLNENQKF…GFEVFGRMID (77 aa)) is domain I, interacts with DnaA modulators. Residues 77–116 (DYELYANDELTELELHRLNNQSSIEEQPRSTAKPASPLVS) form a domain II region. Residues 117-333 (GLNEKYNFEN…GALNRVEFVA (217 aa)) are domain III, AAA+ region. ATP contacts are provided by G161, G163, K164, and T165. The domain IV, binds dsDNA stretch occupies residues 334–455 (RANGIAVVDI…KDIDSIKRKF (122 aa)).

Belongs to the DnaA family. As to quaternary structure, oligomerizes as a right-handed, spiral filament on DNA at oriC.

It is found in the cytoplasm. Plays an essential role in the initiation and regulation of chromosomal replication. ATP-DnaA binds to the origin of replication (oriC) to initiate formation of the DNA replication initiation complex once per cell cycle. Binds the DnaA box (a 9 base pair repeat at the origin) and separates the double-stranded (ds)DNA. Forms a right-handed helical filament on oriC DNA; dsDNA binds to the exterior of the filament while single-stranded (ss)DNA is stabiized in the filament's interior. The ATP-DnaA-oriC complex binds and stabilizes one strand of the AT-rich DNA unwinding element (DUE), permitting loading of DNA polymerase. After initiation quickly degrades to an ADP-DnaA complex that is not apt for DNA replication. Binds acidic phospholipids. The polypeptide is Chromosomal replication initiator protein DnaA (Lactococcus lactis subsp. lactis (strain IL1403) (Streptococcus lactis)).